Here is a 210-residue protein sequence, read N- to C-terminus: MRIILIGSPGSGKGTQAKIMSKKYNLPHISCGDILRKQNKCCDINKLIKKGELINDKLVTNIVLEKLKNINLFKGFILDGFPRTLYQANSIKENKIKIDYVLELFLQEKYIYERVLGRIIDKVSGEIYHLKFNPPKFITEKSNKNKILVRRLDDKKSALQKRINDFFKNSCLISEFYKKESLEKKLKYKIINADFDINTISNKIFNIINV.

ATP is bound at residue 10–15 (GSGKGT). The segment at 30 to 54 (SCGDILRKQNKCCDINKLIKKGELI) is NMP. AMP-binding positions include arginine 36, 52 to 54 (ELI), 80 to 83 (GFPR), and glutamine 87. The segment at 117 to 154 (GRIIDKVSGEIYHLKFNPPKFITEKSNKNKILVRRLDD) is LID. ATP is bound by residues arginine 118 and 127 to 128 (IY). AMP is bound by residues arginine 151 and arginine 162. Phenylalanine 195 contributes to the ATP binding site.

Belongs to the adenylate kinase family. Monomer.

Its subcellular location is the cytoplasm. It catalyses the reaction AMP + ATP = 2 ADP. It participates in purine metabolism; AMP biosynthesis via salvage pathway; AMP from ADP: step 1/1. Functionally, catalyzes the reversible transfer of the terminal phosphate group between ATP and AMP. Plays an important role in cellular energy homeostasis and in adenine nucleotide metabolism. In Wigglesworthia glossinidia brevipalpis, this protein is Adenylate kinase.